A 242-amino-acid chain; its full sequence is Uridylate kinase (242 aa).

ATP-binding positions include 15-18 (KISG), Gly-58, and Arg-62. UMP is bound by residues Asp-77 and 139–146 (TGNPFFTT). The ATP site is built by Thr-166, Tyr-172, and Asp-175.

This sequence belongs to the UMP kinase family. Homohexamer.

It localises to the cytoplasm. The catalysed reaction is UMP + ATP = UDP + ADP. The protein operates within pyrimidine metabolism; CTP biosynthesis via de novo pathway; UDP from UMP (UMPK route): step 1/1. Its activity is regulated as follows. Inhibited by UTP. In terms of biological role, catalyzes the reversible phosphorylation of UMP to UDP. In Buchnera aphidicola subsp. Acyrthosiphon pisum (strain APS) (Acyrthosiphon pisum symbiotic bacterium), this protein is Uridylate kinase.